The sequence spans 245 residues: 1-(5-phosphoribosyl)-5-[(5-phosphoribosylamino)methylideneamino] imidazole-4-carboxamide isomerase (245 aa).

Residue Asp11 is the Proton acceptor of the active site. The active-site Proton donor is the Asp132.

This sequence belongs to the HisA/HisF family.

The protein resides in the cytoplasm. It carries out the reaction 1-(5-phospho-beta-D-ribosyl)-5-[(5-phospho-beta-D-ribosylamino)methylideneamino]imidazole-4-carboxamide = 5-[(5-phospho-1-deoxy-D-ribulos-1-ylimino)methylamino]-1-(5-phospho-beta-D-ribosyl)imidazole-4-carboxamide. The protein operates within amino-acid biosynthesis; L-histidine biosynthesis; L-histidine from 5-phospho-alpha-D-ribose 1-diphosphate: step 4/9. This is 1-(5-phosphoribosyl)-5-[(5-phosphoribosylamino)methylideneamino] imidazole-4-carboxamide isomerase from Bacillus velezensis (strain DSM 23117 / BGSC 10A6 / LMG 26770 / FZB42) (Bacillus amyloliquefaciens subsp. plantarum).